A 248-amino-acid chain; its full sequence is Methionine aminopeptidase 1 (248 aa).

Substrate is bound at residue H77. D94, D105, and H168 together coordinate a divalent metal cation. H175 is a binding site for substrate. The a divalent metal cation site is built by E201 and E232.

As to quaternary structure, monomer. The cofactor is Co(2+). Zn(2+) serves as cofactor. Requires Mn(2+) as cofactor. It depends on Fe(2+) as a cofactor.

The protein resides in the cytoplasm. The catalysed reaction is Release of N-terminal amino acids, preferentially methionine, from peptides and arylamides.. Functionally, removes the N-terminal methionine from nascent proteins. The N-terminal methionine is often cleaved when the second residue in the primary sequence is small and uncharged (Met-Ala-, Cys, Gly, Pro, Ser, Thr, or Val). Requires deformylation of the N(alpha)-formylated initiator methionine before it can be hydrolyzed. This Bacillus subtilis (strain 168) protein is Methionine aminopeptidase 1.